A 705-amino-acid chain; its full sequence is MDTRFHCVYLLTSLDPQCEGDFYIGYTVNPLRRLRQHNGELVNGARRTSRRGRPWTIVCCVSGFPDDRAALKFEWCWQHPTASARLRHAIDILTGLRRLPYAVATLHLLVRASLFCRLDLTLHIFESALLQEAAARAEVLLARRRGAFAVGGGLRASSPRVGTQQHSQRSSSLQGQADGVATPPLPALDSKGELQDASTAAALATTTAASHLLPPLTPSLLFHVEDTTRQAFEDAYLSHDRCLLLPSVGMGVDVGEAGKEGSHMSASAGTSCPYDVSLLSQAARAEWSNASFASDSDDEDTRRFAPYCPSTGSRTPSPQRVHTAASPALLGYRSEERAGDGVLEASPGSSIGCGAALRSFSSPPPPRASSPRSASCPPLYTGINASASLAVDAPHGGVTDACTSSPAAAPAPQPRIPLRFADYGEVDFARAHAEEQHRLHHGLLPCSLCTLPLQPSCVAYCSRAPFCTLRCHLSCLAMWMLYAEAEAAATVDGTDKSPALLSQAPPAPISPLRRLIPSQPCPCPLCGVLLHWGSLVKELKKRVVVERRLHAAQRRIRMEQRWQARLAHIDHTKRSTSAAMRRRQRTRVGAAALAKGAGEAPGAASTVRASTMHVGPARRDAPRVSSPSCLGEPTLTSFAAAASCPSPSTSLAALSPAASASPISRHNGHSNTVTATNTAVAAAAAVSDASLLSLTDFCEEDWLLP.

The GIY-YIG domain maps to 4 to 90 (RFHCVYLLTS…TASARLRHAI (87 aa)). Disordered stretches follow at residues 155 to 192 (RASS…DSKG) and 290 to 323 (ASFA…RVHT). 2 stretches are compositionally biased toward polar residues: residues 160–175 (RVGT…SLQG) and 310–320 (STGSRTPSPQR). Residues 446–526 (CSLCTLPLQP…PSQPCPCPLC (81 aa)) form an SLX1-type zinc finger. Low complexity predominate over residues 595–604 (KGAGEAPGAA). Residues 595 to 628 (KGAGEAPGAASTVRASTMHVGPARRDAPRVSSPS) are disordered.

Belongs to the SLX1 family. As to quaternary structure, forms a heterodimer with a member of the SLX4 family. The cofactor is a divalent metal cation.

It is found in the nucleus. Catalytic subunit of a heterodimeric structure-specific endonuclease that resolves DNA secondary structures generated during DNA repair and recombination. Has endonuclease activity towards branched DNA substrates, introducing single-strand cuts in duplex DNA close to junctions with ss-DNA. This Leishmania infantum protein is Structure-specific endonuclease subunit SLX1 homolog.